Consider the following 138-residue polypeptide: Basic phospholipase A2 Tpu-G6D49 (138 aa).

Positions 1 to 16 (MRTLWIMAVLLVGVEG) are cleaved as a signal peptide. 7 cysteine pairs are disulfide-bonded: Cys-42/Cys-131, Cys-44/Cys-60, Cys-59/Cys-111, Cys-65/Cys-138, Cys-66/Cys-104, Cys-73/Cys-97, and Cys-91/Cys-102. Tyr-43, Gly-45, and Gly-47 together coordinate Ca(2+). The active site involves His-63. Asp-64 contacts Ca(2+). The active site involves Asp-105.

In terms of assembly, monomer. Requires Ca(2+) as cofactor. Expressed by the venom gland.

The protein resides in the secreted. It carries out the reaction a 1,2-diacyl-sn-glycero-3-phosphocholine + H2O = a 1-acyl-sn-glycero-3-phosphocholine + a fatty acid + H(+). In terms of biological role, snake venom phospholipase A2 (PLA2) that impairs hemostasis. It weakly inhibits ADP-induced platelet aggregation when tested on platelet rich plasma from human and rabbit blood (15-25% of inhibition at 5-10 ug of enzyme), and dose-dependently inhibits blood coagulation, possibly by inhibiting thrombin activation. Also induces local edema a few hours after injection in the hind foot. Exhibits high hydrolytic activities toward L-dipalmitoyl phosphatidylcholine. PLA2 catalyzes the calcium-dependent hydrolysis of the 2-acyl groups in 3-sn-phosphoglycerides. This chain is Basic phospholipase A2 Tpu-G6D49, found in Craspedocephalus puniceus (Flat-nosed pitviper).